A 513-amino-acid chain; its full sequence is uncharacterized protein (513 aa).

Transmembrane regions (helical) follow at residues 3 to 23, 47 to 67, 71 to 91, 129 to 149, 153 to 173, 177 to 197, 233 to 253, 273 to 293, 320 to 340, 374 to 394, 395 to 415, 424 to 444, and 462 to 482; these read MTAF…TYFA, LAIA…GMIA, FDGF…LYIV, TFYM…LLGL, AAVL…GMIA, VQII…IIVF, ETLS…HILI, WIIG…AAFV, FLFA…VTGL, ASVA…SLNV, AFLV…LIVF, ASGA…LVSM, and LIPL…GAWL.

It belongs to the sodium:solute symporter (SSF) (TC 2.A.21) family.

Its subcellular location is the cell membrane. This is an uncharacterized protein from Bacillus subtilis (strain 168).